We begin with the raw amino-acid sequence, 7756 residues long: Linear gramicidin synthase subunit C (7756 aa).

6 Carrier domains span residues 977–1052, 2042–2116, 3557–3632, 4621–4695, 6141–6216, and 7200–7274; these read EPRN…AALQ, APAT…ADSS, APRT…ASLL, APAT…TVTD, APRK…AGLL, and APET…GDSV. O-(pantetheine 4'-phosphoryl)serine occurs at positions 1012, 2077, 3592, 4656, 6176, and 7235.

It belongs to the ATP-dependent AMP-binding enzyme family. Large multienzyme complex composed of 4 subunits; LgrA, LgrB, LgrC and LgrD. The cofactor is pantetheine 4'-phosphate.

In terms of biological role, activates the 7th to 12th amino acids (Val, D-Val, Trp, D-Leu, Xaa and D-Leu) in linear gramicidin and catalyzes the formation of the peptide bond between them. This enzyme is also responsible for the epimerization of the 8th (D-Val), the 10th (D-Leu) and 12th (D-Leu) amino acids. The 11th (Xaa) amino acid is Trp in linear gramicidin A; Phe in linear gramicidin B and Tyr in linear gramicidin C. The chain is Linear gramicidin synthase subunit C (lgrC) from Brevibacillus parabrevis.